Here is a 145-residue protein sequence, read N- to C-terminus: 3-dehydroquinate dehydratase (145 aa).

Tyr-22 acts as the Proton acceptor in catalysis. Substrate is bound by residues Asn-74, His-80, and Asp-87. His-100 (proton donor) is an active-site residue. Substrate-binding positions include 101–102 (IS) and Arg-111.

Belongs to the type-II 3-dehydroquinase family. As to quaternary structure, homododecamer.

It catalyses the reaction 3-dehydroquinate = 3-dehydroshikimate + H2O. Its pathway is metabolic intermediate biosynthesis; chorismate biosynthesis; chorismate from D-erythrose 4-phosphate and phosphoenolpyruvate: step 3/7. Functionally, catalyzes a trans-dehydration via an enolate intermediate. The polypeptide is 3-dehydroquinate dehydratase (Lachnoclostridium phytofermentans (strain ATCC 700394 / DSM 18823 / ISDg) (Clostridium phytofermentans)).